The primary structure comprises 604 residues: Glucose-methanol-choline family oxidoreductase mfmG (604 aa).

Positions 1–24 (MYMLRPSSLLLATGLLNQGSSVLA) are cleaved as a signal peptide. N-linked (GlcNAc...) asparagine glycosylation is present at Asn-32. Residues 44–45 (TA) and 65–66 (EA) each bind FAD. N-linked (GlcNAc...) asparagine glycosylation is found at Asn-76 and Asn-97. FAD is bound at residue 126 to 129 (NFMA). N-linked (GlcNAc...) asparagine glycans are attached at residues Asn-260, Asn-265, Asn-401, and Asn-460. Residue His-538 is the Proton acceptor of the active site. Residues Ala-572 and 584-585 (PQ) each bind FAD.

It belongs to the GMC oxidoreductase family. Homodimer. The cofactor is FAD.

Functionally, oxidoreductase; part of the gene cluster that mediates the biosynthesis of the phthalide-terpenoid hybrid 11'-O-desmethylfendlerol. MfmG seems not to be involved directly in the biosynthesis of 11'-O-desmethylfendlerol and its role has still to be determined. The biosynthesis of 11'-O-desmethylfendlerol begins with the NR-PKS mfmB that forms 3,5-dimethylorsellinic acid (DMOA), which is then transformed into the phthalide 5,7-dihydroxy-4-(hydroxymethyl)-6-methylphthalide by the cytochrome P450 monooxygenase mfmA and the hydrolase mfmC. Subsequently, the methyltransferase mfmE catalyzes 7-O-methylation to yield 5-hydroxy-4-(hydroxymethyl)-7-methoxy-6-methylphthalide, which undergoes C-3 hydroxylation by the cytochrome P450 monooxygenase mfmF. The resultant cyclopolic acid (2,5-dihydroxy-4-(hydroxymethyl)-7-methoxy-6-methylphthalide) is then farnesylated by the DMATS-type prenyltransferase mfmD to afford 5-O-farnesylcyclopolic acid. Finally, the Pyr4-family terpene cyclase mfmH cyclizes the farnesyl moiety of 5-O-farnesylcyclopolic acid into a drimane-like structure, thus completing the biosynthesis of 11'-O-desmethylfendlerol. This chain is Glucose-methanol-choline family oxidoreductase mfmG, found in Annulohypoxylon moriforme (Filamentous fungus).